The following is a 330-amino-acid chain: D-alanine--D-alanine ligase (330 aa).

Residues 122–323 (NRFLSGFGIR…MKEVLCTIIR (202 aa)) form the ATP-grasp domain. 151–206 (IARMGLPLFVKPNVGGSSIATTKVVEAAQLLPAIEQAFSEGEEVMIERLICGTEVT) is a binding site for ATP. Residues D277, E290, and N292 each coordinate Mg(2+).

This sequence belongs to the D-alanine--D-alanine ligase family. Mg(2+) serves as cofactor. Mn(2+) is required as a cofactor.

Its subcellular location is the cytoplasm. The catalysed reaction is 2 D-alanine + ATP = D-alanyl-D-alanine + ADP + phosphate + H(+). The protein operates within cell wall biogenesis; peptidoglycan biosynthesis. Functionally, cell wall formation. The chain is D-alanine--D-alanine ligase from Porphyromonas gingivalis (strain ATCC BAA-308 / W83).